The sequence spans 428 residues: Cytokine-dependent hematopoietic cell linker (428 aa).

The tract at residues 1–22 is disordered; it reads MNRQGNRKTTKEGSNDLKFQNF. Residues Tyr-69 and Tyr-96 each carry the phosphotyrosine; by LYN modification. Disordered stretches follow at residues 135–198 and 244–271; these read DKPI…EVQR and SSSF…PQRC. Residues 159-164 form a mediates interaction with PLCG1; essential for BCR signaling; involved in restoration of BCR-induced calcium response and ERK2 and JNK2 activation in BLNK-deficient cells expressing LAT region; it reads PLPPPR. Positions 178–180 are mediates interaction with LAT, GRB2, and FGR; involved in translocation to the glycolipid-enriched microdomain and restoration of BCR-induced calcium response in BLNK-deficient DT40 cells expressing LAT; the sequence is PEP. Low complexity predominate over residues 244–253; it reads SSSFTTSNHS. Residues 309 to 419 form the SH2 domain; that stretch reads WYIGEYSRQA…RKQCHLTQPL (111 aa).

In terms of assembly, when phosphorylated, interacts with PLCG1, PLCG2, GRB2, VAV and LAT. Interacts with LBR and AGO2. Interacts with FGR. Part of a complex consisting of CLNK, SKAP1 and FYB1. Interacts (via SH2 domain) with FYB1; this interaction allows SKAP1 and FYB1 to promote tyrosine phosphorylation of CLNK by LYN. Interacts (via SH2 domain) with MAP4K1. Tyrosine-phosphorylated upon BCR cross-linking. Tyrosine phosphorylation at both Tyr-69 and Tyr-96 are required for BCR-induced calcium response and are essential to restore PLCG2-mediated signaling in BLNK-deficient DT40 cells, but this phosphorylation is dispensable in cells expressing LAT. Interacts with the SH2 domain of PLCG1 via phosphorylated Tyr-96. Tyrosine phosphorylation is increased when complexed with SKAP1 and FYB1.

The protein resides in the cytoplasm. In terms of biological role, an adapter protein which plays a role in the regulation of immunoreceptor signaling, including PLC-gamma-mediated B-cell antigen receptor (BCR) signaling and FC-epsilon R1-mediated mast cell degranulation. Together with FGR, it acts as a negative regulator of natural killer cell-activating receptors and inhibits interferon-gamma production. Acts as a positive regulator of both T-cell receptor and natural killer T (NKT) cell receptor signaling in CD4-positive NKT cells. Together with MAP4K1, it enhances CD3-triggered activation of T-cells and subsequent IL2 production. May be involved in tumor necrosis factor induced cell death by promoting reactive oxidative species generation, and MLKL oligomerization, ultimately leading to necrosis. Involved in phosphorylation of LAT. May be involved in high affinity immunoglobulin epsilon receptor signaling in mast cells. This is Cytokine-dependent hematopoietic cell linker (CLNK) from Homo sapiens (Human).